We begin with the raw amino-acid sequence, 205 residues long: Large ribosomal subunit protein bL25 (205 aa).

The protein belongs to the bacterial ribosomal protein bL25 family. CTC subfamily. In terms of assembly, part of the 50S ribosomal subunit; part of the 5S rRNA/L5/L18/L25 subcomplex. Contacts the 5S rRNA. Binds to the 5S rRNA independently of L5 and L18.

Its function is as follows. This is one of the proteins that binds to the 5S RNA in the ribosome where it forms part of the central protuberance. This is Large ribosomal subunit protein bL25 from Stutzerimonas stutzeri (strain A1501) (Pseudomonas stutzeri).